Here is a 353-residue protein sequence, read N- to C-terminus: Photosystem II D2 protein (353 aa).

Threonine 2 is modified (N-acetylthreonine). Phosphothreonine is present on threonine 2. The helical transmembrane segment at 41-61 (CAYFALGGWFTGTTFVTSWYT) threads the bilayer. Histidine 118 lines the chlorophyll a pocket. The helical transmembrane segment at 125–141 (GFMLRQFELARPVQLRP) threads the bilayer. Residues glutamine 130 and asparagine 143 each contribute to the pheophytin a site. Residues 153 to 166 (VFLSVFLIYPLGQS) traverse the membrane as a helical segment. Histidine 198 provides a ligand contact to chlorophyll a. A helical transmembrane segment spans residues 208 to 228 (AVLLCAIHGATVENTLFEDGD). A plastoquinone-binding residues include histidine 215 and phenylalanine 262. Histidine 215 lines the Fe cation pocket. Fe cation is bound at residue histidine 269. A helical membrane pass occupies residues 279–295 (GLWMSAIGVVGLALNLR).

The protein belongs to the reaction center PufL/M/PsbA/D family. As to quaternary structure, PSII is composed of 1 copy each of membrane proteins PsbA, PsbB, PsbC, PsbD, PsbE, PsbF, PsbH, PsbI, PsbJ, PsbK, PsbL, PsbM, PsbT, PsbX, PsbY, PsbZ, Psb30/Ycf12, at least 3 peripheral proteins of the oxygen-evolving complex and a large number of cofactors. It forms dimeric complexes. The D1/D2 heterodimer binds P680, chlorophylls that are the primary electron donor of PSII, and subsequent electron acceptors. It shares a non-heme iron and each subunit binds pheophytin, quinone, additional chlorophylls, carotenoids and lipids. There is also a Cl(-1) ion associated with D1 and D2, which is required for oxygen evolution. The PSII complex binds additional chlorophylls, carotenoids and specific lipids. is required as a cofactor. In terms of processing, only phosphorylated in mesophyll cells, phosphorylation increases when cells are grown under high rather than low light regimes (70 vs 900 umol photons/m-2/s).

The protein resides in the plastid. It localises to the chloroplast thylakoid membrane. The catalysed reaction is 2 a plastoquinone + 4 hnu + 2 H2O = 2 a plastoquinol + O2. Photosystem II (PSII) is a light-driven water:plastoquinone oxidoreductase that uses light energy to abstract electrons from H(2)O, generating O(2) and a proton gradient subsequently used for ATP formation. It consists of a core antenna complex that captures photons, and an electron transfer chain that converts photonic excitation into a charge separation. The D1/D2 (PsbA/PsbD) reaction center heterodimer binds P680, the primary electron donor of PSII as well as several subsequent electron acceptors. D2 is needed for assembly of a stable PSII complex. The polypeptide is Photosystem II D2 protein (Zea mays (Maize)).